Here is a 425-residue protein sequence, read N- to C-terminus: MKTPSQTHVLGLAHPPLPMVRLAFIGLGNRGVLTLQRYLQIEGVEIKALCEIREGNLVKAQKILREAGYPQPDGYTGPDGWKRMCERDDIDLVFICTDWLTHTPMAVYSMEHGKHVAIEVPAAMTVEECWKLVDTAEKTRQHCMMLENCCYDPFALTTLNMAQQGAFGEITHVEGAYIHDLRSIYFADESKGGFHNHWGKKYSIEHTGNPYPTHGLGPVCQILNIHRGDRMNYLVSLSSLQAGMTEYARKNFGADSPEARQKYLLGDMNTTLIQTVKGKSIMIQYNVVTPRPYSRLHTVCGTKGFAQKYPVPSIALEPDAGSPLEGKALEEIMERYKHPFTATFGTEAHRRNLPNEMNYVMDCRLIYCLRNGLPLDMDVYDAAEWSCITELSEQSVLNGSIPVEIPDFTRGAWKKCHISRTSDLY.

NAD(+) is bound by residues 29-30, E51, 99-102, 119-120, and N148; these read NR, WLTH, and EV. Y177 contributes to the substrate binding site. NAD(+) contacts are provided by residues 194–198 and Y211; that span reads FHNHW. Residues 211 to 214 and Y293 contribute to the substrate site; that span reads YPTH.

The protein belongs to the Gfo/Idh/MocA family. Glycosyl hydrolase 109 subfamily. NAD(+) serves as cofactor.

Glycosidase. The protein is Glycosyl hydrolase family 109 protein 2 of Bacteroides fragilis (strain YCH46).